The primary structure comprises 376 residues: Alcohol dehydrogenase 6 (376 aa).

Cysteine 47, histidine 69, cysteine 99, cysteine 102, cysteine 105, cysteine 113, and cysteine 175 together coordinate Zn(2+). Residues 200-205 (GLGGVG), aspartate 224, arginine 229, 293-295 (VGA), and arginine 371 contribute to the NAD(+) site.

It belongs to the zinc-containing alcohol dehydrogenase family. Class-V subfamily. In terms of assembly, dimer. Requires Zn(2+) as cofactor.

Its subcellular location is the cytoplasm. The catalysed reaction is a primary alcohol + NAD(+) = an aldehyde + NADH + H(+). It carries out the reaction a secondary alcohol + NAD(+) = a ketone + NADH + H(+). Alcohol dehydrogenase. Catalyzes the NAD-dependent oxidation of primary alcohols to the corresponding aldehydes. Oxidizes secondary alcohols to the corresponding ketones. In Rattus norvegicus (Rat), this protein is Alcohol dehydrogenase 6 (Adh6).